The following is a 396-amino-acid chain: uncharacterized protein (396 aa).

Transmembrane regions (helical) follow at residues 12–32 (LLAL…SVGL), 48–68 (GLTV…LTSL), 78–98 (LLWI…ASSI), 106–126 (VISA…AADI), 138–158 (IMFT…TFIG), 165–185 (FAFM…GILV), 209–229 (LLLL…VFTY), 242–262 (AGTV…GNMI), 271–291 (PIAA…VLTF), 297–317 (AAGL…VPGL), 338–358 (AMNI…GGVI), and 362–382 (IGLI…VILT).

Belongs to the major facilitator superfamily.

The protein resides in the cell membrane. This is an uncharacterized protein from Bacillus subtilis (strain 168).